We begin with the raw amino-acid sequence, 1141 residues long: DNA-directed RNA polymerase subunit beta (1141 aa).

The protein belongs to the RNA polymerase beta chain family. As to quaternary structure, the RNAP catalytic core consists of 2 alpha, 1 beta, 1 beta' and 1 omega subunit. When a sigma factor is associated with the core the holoenzyme is formed, which can initiate transcription.

It catalyses the reaction RNA(n) + a ribonucleoside 5'-triphosphate = RNA(n+1) + diphosphate. Its function is as follows. DNA-dependent RNA polymerase catalyzes the transcription of DNA into RNA using the four ribonucleoside triphosphates as substrates. The chain is DNA-directed RNA polymerase subunit beta from Frankia alni (strain DSM 45986 / CECT 9034 / ACN14a).